The primary structure comprises 607 residues: Elongation factor 4 (607 aa).

Residues 11-193 form the tr-type G domain; sequence GKIRNFSIIA…QIVEKVPAPT (183 aa). Residues 23–28 and 140–143 contribute to the GTP site; these read DHGKST and NKID.

This sequence belongs to the TRAFAC class translation factor GTPase superfamily. Classic translation factor GTPase family. LepA subfamily.

It localises to the cell membrane. It carries out the reaction GTP + H2O = GDP + phosphate + H(+). Functionally, required for accurate and efficient protein synthesis under certain stress conditions. May act as a fidelity factor of the translation reaction, by catalyzing a one-codon backward translocation of tRNAs on improperly translocated ribosomes. Back-translocation proceeds from a post-translocation (POST) complex to a pre-translocation (PRE) complex, thus giving elongation factor G a second chance to translocate the tRNAs correctly. Binds to ribosomes in a GTP-dependent manner. The polypeptide is Elongation factor 4 (Streptococcus pneumoniae (strain JJA)).